The primary structure comprises 453 residues: Cysteine--tRNA ligase (453 aa).

Cys31 contacts Zn(2+). Residues 33 to 43 (PTVYDNPHIGN) carry the 'HIGH' region motif. Positions 213, 238, and 242 each coordinate Zn(2+). The short motif at 271–275 (KMAKS) is the 'KMSKS' region element. An ATP-binding site is contributed by Lys274.

It belongs to the class-I aminoacyl-tRNA synthetase family. Monomer. It depends on Zn(2+) as a cofactor.

It is found in the cytoplasm. The catalysed reaction is tRNA(Cys) + L-cysteine + ATP = L-cysteinyl-tRNA(Cys) + AMP + diphosphate. This Pelagibacter ubique (strain HTCC1062) protein is Cysteine--tRNA ligase.